Here is a 593-residue protein sequence, read N- to C-terminus: Mitoguardin 2 (593 aa).

Helical transmembrane passes span 11–31 (MIQA…TTFG) and 42–62 (PGLR…ALAA). 2 disordered regions span residues 101-134 (KKGY…HSGS) and 195-228 (LSVG…EPES). Polar residues predominate over residues 107 to 123 (RRVQSPSSKSNDTLSGI). The segment covering 124 to 134 (SSIEPSKHSGS) has biased composition (low complexity). Residue Ser-132 is modified to Phosphoserine. Residue Thr-206 is modified to Phosphothreonine. Ser-220, Ser-224, and Ser-228 each carry phosphoserine. At Thr-273 the chain carries Phosphothreonine. Ser-276 and Ser-295 each carry phosphoserine. Residues 292 to 298 (SFFSATE) carry the FFAT motif. The chain crosses the membrane as a helical span at residues 563–583 (ILLGYLGVPAASSIGLNGVLP).

Belongs to the mitoguardin family. As to quaternary structure, homodimer and heterodimer; forms heterodimers with MIGA1. Interacts with PLD6/MitoPLD. Interacts (via phosphorylated FFAT motif) with MOSPD2. Phosphorylation at Ser-295 of the FFAT motif activates interaction with MOSPD2.

It is found in the mitochondrion outer membrane. Functionally, regulator of mitochondrial fusion: acts by forming homo- and heterodimers at the mitochondrial outer membrane and facilitating the formation of PLD6/MitoPLD dimers. May act by regulating phospholipid metabolism via PLD6/MitoPLD. This Bos taurus (Bovine) protein is Mitoguardin 2.